The following is a 221-amino-acid chain: Probable septum site-determining protein MinC (221 aa).

It belongs to the MinC family. As to quaternary structure, interacts with MinD and FtsZ.

Cell division inhibitor that blocks the formation of polar Z ring septums. Rapidly oscillates between the poles of the cell to destabilize FtsZ filaments that have formed before they mature into polar Z rings. Prevents FtsZ polymerization. This chain is Probable septum site-determining protein MinC, found in Shewanella sp. (strain MR-7).